Consider the following 503-residue polypeptide: Cytochrome P450 3A9 (503 aa).

Heme is bound at residue Cys442.

The protein belongs to the cytochrome P450 family. Heme is required as a cofactor. Mainly expressed in olfactory epithelium.

Its subcellular location is the endoplasmic reticulum membrane. The protein localises to the microsome membrane. It catalyses the reaction an organic molecule + reduced [NADPH--hemoprotein reductase] + O2 = an alcohol + oxidized [NADPH--hemoprotein reductase] + H2O + H(+). In terms of biological role, this isozyme seems to be implicated in olfaction. Active in the demethylation of erythromycin as well as benzphetamine. This is Cytochrome P450 3A9 (Cyp3a9) from Rattus norvegicus (Rat).